A 380-amino-acid polypeptide reads, in one-letter code: Cytochrome b (380 aa).

Transmembrane regions (helical) follow at residues 34–54 (FGSL…LLAM), 78–99 (WLIR…YLHI), 114–134 (WNTG…GYVL), and 179–199 (FFAL…IHLT). Positions 84 and 98 each coordinate heme b. The heme b site is built by His183 and His197. His202 provides a ligand contact to a ubiquinone. A run of 4 helical transmembrane segments spans residues 227–247 (LKDI…ALFS), 289–309 (LGGV…PFLH), 321–341 (LSQL…WVGS), and 348–368 (FIII…ILFP).

This sequence belongs to the cytochrome b family. As to quaternary structure, the cytochrome bc1 complex contains 11 subunits: 3 respiratory subunits (MT-CYB, CYC1 and UQCRFS1), 2 core proteins (UQCRC1 and UQCRC2) and 6 low-molecular weight proteins (UQCRH/QCR6, UQCRB/QCR7, UQCRQ/QCR8, UQCR10/QCR9, UQCR11/QCR10 and a cleavage product of UQCRFS1). This cytochrome bc1 complex then forms a dimer. Heme b is required as a cofactor.

The protein resides in the mitochondrion inner membrane. In terms of biological role, component of the ubiquinol-cytochrome c reductase complex (complex III or cytochrome b-c1 complex) that is part of the mitochondrial respiratory chain. The b-c1 complex mediates electron transfer from ubiquinol to cytochrome c. Contributes to the generation of a proton gradient across the mitochondrial membrane that is then used for ATP synthesis. The protein is Cytochrome b (MT-CYB) of Macronectes halli (Hall's giant petrel).